A 239-amino-acid polypeptide reads, in one-letter code: 7-cyano-7-deazaguanine synthase (239 aa).

7–17 contributes to the ATP binding site; the sequence is LSGGIDSSTLL. Residues Cys-184, Cys-192, Cys-195, and Cys-198 each contribute to the Zn(2+) site.

Belongs to the QueC family. It depends on Zn(2+) as a cofactor.

It carries out the reaction 7-carboxy-7-deazaguanine + NH4(+) + ATP = 7-cyano-7-deazaguanine + ADP + phosphate + H2O + H(+). The protein operates within purine metabolism; 7-cyano-7-deazaguanine biosynthesis. Functionally, catalyzes the ATP-dependent conversion of 7-carboxy-7-deazaguanine (CDG) to 7-cyano-7-deazaguanine (preQ(0)). This Archaeoglobus fulgidus (strain ATCC 49558 / DSM 4304 / JCM 9628 / NBRC 100126 / VC-16) protein is 7-cyano-7-deazaguanine synthase.